We begin with the raw amino-acid sequence, 293 residues long: Tumor necrosis factor receptor superfamily member 13B (293 aa).

Residues 1–165 lie on the Extracellular side of the membrane; sequence MSGLGRSRRG…SADQVALVYS (165 aa). 2 TNFR-Cys repeats span residues 33–67 and 70–104; these read SCPE…AFCR and SCRK…AYFC. 6 disulfides stabilise this stretch: C34/C47, C50/C62, C54/C66, C71/C86, C89/C100, and C93/C104. Residues 115-146 are disordered; the sequence is PPELRRQRSGEVENNSDNSGRYQGLEHRGSEA. The span at 126–135 shows a compositional bias: polar residues; sequence VENNSDNSGR. The N-linked (GlcNAc...) asparagine glycan is linked to N128. A helical; Signal-anchor for type III membrane protein membrane pass occupies residues 166–186; that stretch reads TLGLCLCAVLCCFLVAVACFL. The Cytoplasmic portion of the chain corresponds to 187–293; that stretch reads KKRGDPCSCQ…VPAQEGGPGA (107 aa). Residues 192 to 226 form a disordered region; it reads PCSCQPRSRPRQSPAKSSQDHAMEAGSPVSTSPEP.

As to quaternary structure, binds TRAF2, TRAF5 and TRAF6. Binds the NH2-terminal domain of CAMLG with its C-terminus. Highly expressed in spleen, thymus, small intestine and peripheral blood leukocytes. Expressed in resting B-cells and activated T-cells, but not in resting T-cells.

The protein resides in the membrane. In terms of biological role, receptor for TNFSF13/APRIL and TNFSF13B/TALL1/BAFF/BLYS that binds both ligands with similar high affinity. Mediates calcineurin-dependent activation of NF-AT, as well as activation of NF-kappa-B and AP-1. Involved in the stimulation of B- and T-cell function and the regulation of humoral immunity. This Homo sapiens (Human) protein is Tumor necrosis factor receptor superfamily member 13B (TNFRSF13B).